Here is an 879-residue protein sequence, read N- to C-terminus: MKFMKTNDLREAYLKFFESKDHLRMDSFSLVPKNDKSLLLINAGMAPLKPYFTGLQEPPKRRITTCQKCIRTGDIENVGITSRHGTFFEMLGNFSFADYFKKEIIPWAWEFITEVLELPKDRLYVTIYLDDDEAYEYWTTLTDVDKTHIFRLGKEDNFWEHGAGPCGPCTEIHFNRSEEIPTNADEFVKLADEDKIIEFWNLVFTQFDGDGKGNYEKLANTNIDTGMGLERLATIMQEKNSIFEIDTLENILSEVAKLANVKYGENQKTDISLRLITDHIRSITFMISDDVMPSNEGRGYVLRRLLRRAARHGKTLGIKEAFLCNLCDTVIRDSSEAYPELNSKKEYIKKVIKIEEDKFRETLDSGMEILNGFISELKAKNEKVLSGVDGFKLYDTFGFPMELTKEILEDEGLSLDEDAFHEEMKVQRERARSARKVSNYMGTDVKTLDIIPAEVETVFDGYDNDTLNAEVKVLIEGEDFTDAITEGNKAIIVTDVTPLYAEMGGQIGDTGVIFNDGFKANVLDTKKNIGGKIVHFVEVVSGELKVGDTVTIEVDKVRRENIKKNHTATHLLDKALTEVLGSHVHQAGSYVSNDRLRFDFSHFEAMTEEEINKVEDLVNEAITSVTPVVTEVMDLQEAKNSGAIGIFDDKYADKVRVVSAGEYSKELCGGTHIDNTGKIGLFKIISESGIAAGTRRIEAVIGKEAYKIVNEKKDLLKEISTKLKCSEKELLAKLDQQVKELKEKDKEITALKSKFASMGIDDIVSSSRNVKDINVISYELKDVDSDTLRDVCEKVRDKAPNSIVLLMSANAGKVIICAMATKDAVAKGAHCGKLIKEISSMLGGGGGGRPDMAQAGGKMPEKIQEAIEESYKIVETLAK.

4 residues coordinate Zn(2+): His-566, His-570, Cys-668, and His-672.

The protein belongs to the class-II aminoacyl-tRNA synthetase family. Zn(2+) serves as cofactor.

Its subcellular location is the cytoplasm. It catalyses the reaction tRNA(Ala) + L-alanine + ATP = L-alanyl-tRNA(Ala) + AMP + diphosphate. In terms of biological role, catalyzes the attachment of alanine to tRNA(Ala) in a two-step reaction: alanine is first activated by ATP to form Ala-AMP and then transferred to the acceptor end of tRNA(Ala). Also edits incorrectly charged Ser-tRNA(Ala) and Gly-tRNA(Ala) via its editing domain. The chain is Alanine--tRNA ligase from Clostridium beijerinckii (strain ATCC 51743 / NCIMB 8052) (Clostridium acetobutylicum).